A 113-amino-acid polypeptide reads, in one-letter code: Nucleoid-associated protein ROP_41370 (113 aa).

The protein belongs to the YbaB/EbfC family. In terms of assembly, homodimer.

It localises to the cytoplasm. The protein localises to the nucleoid. In terms of biological role, binds to DNA and alters its conformation. May be involved in regulation of gene expression, nucleoid organization and DNA protection. In Rhodococcus opacus (strain B4), this protein is Nucleoid-associated protein ROP_41370.